Here is a 243-residue protein sequence, read N- to C-terminus: UPF0246 protein M6_Spy1787 (243 aa).

The protein belongs to the UPF0246 family.

In Streptococcus pyogenes serotype M6 (strain ATCC BAA-946 / MGAS10394), this protein is UPF0246 protein M6_Spy1787.